The primary structure comprises 912 residues: Protein translocase subunit SecA (912 aa).

ATP-binding positions include Gln-87, 105–109 (GEGKT), and Asp-510. The segment at 854-912 (KLRHEQASAAQAEGEGDDGQQGQQATPETFVRQERKVGRNEPCPCGSGKKYKQCCGKVS) is disordered. Zn(2+)-binding residues include Cys-896, Cys-898, Cys-907, and Cys-908.

This sequence belongs to the SecA family. As to quaternary structure, monomer and homodimer. Part of the essential Sec protein translocation apparatus which comprises SecA, SecYEG and auxiliary proteins SecDF-YajC and YidC. Requires Zn(2+) as cofactor.

It localises to the cell inner membrane. Its subcellular location is the cytoplasm. The enzyme catalyses ATP + H2O + cellular proteinSide 1 = ADP + phosphate + cellular proteinSide 2.. In terms of biological role, part of the Sec protein translocase complex. Interacts with the SecYEG preprotein conducting channel. Has a central role in coupling the hydrolysis of ATP to the transfer of proteins into and across the cell membrane, serving both as a receptor for the preprotein-SecB complex and as an ATP-driven molecular motor driving the stepwise translocation of polypeptide chains across the membrane. The sequence is that of Protein translocase subunit SecA from Marinobacter nauticus (strain ATCC 700491 / DSM 11845 / VT8) (Marinobacter aquaeolei).